A 1035-amino-acid chain; its full sequence is MKMASTRCKLARYLEDLEDVDLKKFKMHLEDYPPQKGCISLPRGQTEKADHVDLATLMIDFNGEEKAWAMAVWIFAAINRRDLYEKAKRDEPKWGSDNARVSNPTVICQEDSIEEEWMGLLEYLSRISICKKKKDYCKKYRKYVRSRFQCIEDRNARLGESVSLNKRYTRLRLIKEHRSQQEREHELLAIGKTKTWESPVSPIKMELLFDPDDEHSEPVHTVVFQGAAGIGKTILARKIMLDWASGTLYQDRFDYLFYIHCREVSLVTQRSLGDLIMSCCPDPNPPIRKIVSKPSRILFLMDGFDELQGAFDEHIGPLCTDWQKAERGDILLSSLIRKKLLPEASLLITTRPVALEKLQHLLDHPRHVEILGFSEAKRKEYFFKYFSDEAQARAAFSLIQENEVLFTMCFIPLVCWIVCTGLKQQMESGKSLAQTSKTTTAVYTFFLSSLLQPRGGSQEHRLCAHLWGLCSLAADGIWNQKILFEESDLRNHGLQKADVSAFLRMNLFQKEVDCEKFYSFIHMTFQEFFAAMYYLLEEEKEGRTNVPGSCLKLPSRDVTVLLENYGKFEKGYLIFVVRFLFGLVNQERTCYLEKKLSCKISQQIRLELLKWIEVKAKAKKLQIQPSQLELFYCLYEMQEEDFVQRAMDYFPKIEINLSTRMDHVVSSFCIENCHRVESLSLGFLHNMPKEEEEEEKEGRHLDMVQCVLPGSHAACSHRLVNSHLTSSFCRGLFSVLSTSQSLTELDLSDNSLGDPGMRVLCETLQHPDCNIRRLWLGRCGLSHECCFDISLVLSSNQKLVELDLSDNALGDFGIRLLCVGLKHLLCNLKKLWLVSCCLTSACCQDLASVLSTSRSLTRLYVGENALGDAGVAILCEKAKNPQCNLQKLGLVNSGLTSACCSALSSVLSTNQNLTHLYLRGNTLGDKGIKLLCEGLLHPDCKLQVLELDNCNLTSHCCWDLSTLLTSSQSLRKLSLGNNDLGDLGVMMFCEVLKQQSCLLQNLGLSEMYFNYETKSALETLQEEKPELTIVFEPSW.

The 93-residue stretch at 1–93 (MKMASTRCKL…YEKAKRDEPK (93 aa)) folds into the Pyrin domain. Ser-5 carries the phosphoserine modification. A disulfide bond links Cys-8 and Cys-108. Tyr-13 carries the post-translational modification Phosphotyrosine. Residue Cys-130 is the site of S-palmitoyl cysteine attachment. Positions 131–134 (KKKK) are required for binding to phosphatidylinositol 4-phosphate (PtdIns4P). Residues Tyr-136, Tyr-140, and Tyr-143 each carry the phosphotyrosine modification. The FISNA domain occupies 140 to 210 (YRKYVRSRFQ…SPIKMELLFD (71 aa)). A phosphoserine mark is found at Ser-161 and Ser-163. Tyr-168 is subject to Phosphotyrosine. ATP is bound at residue Thr-169. Phosphoserine occurs at positions 198 and 201. Residues 220–536 (HTVVFQGAAG…EFFAAMYYLL (317 aa)) form the NACHT domain. 226-233 (GAAGIGKT) provides a ligand contact to ATP. Phosphoserine is present on residues Ser-265 and Ser-295. A Glycyl lysine isopeptide (Lys-Gly) (interchain with G-Cter in ubiquitin) cross-link involves residue Lys-324. Ser-334 is modified (phosphoserine). Residues 355–359 (LEKLQ) carry the KFERQ-like motif 1 motif. Lys-430 is covalently cross-linked (Glycyl lysine isopeptide (Lys-Gly) (interchain with G-Cter in ubiquitin)). Position 522 (His-522) interacts with ATP. The short motif at 603–607 (QIRLE) is the KFERQ-like motif 2 element. Lys-689 is covalently cross-linked (Glycyl lysine isopeptide (Lys-Gly) (interchain with G-Cter in ubiquitin)). A phosphoserine mark is found at Ser-727 and Ser-734. LRR repeat units follow at residues 741–761 (SLTELDLSDNSLGDPGMRVLC), 770–791 (NIRRLWLGRCGLSHECCFDISL), 798–818 (KLVELDLSDNALGDFGIRLLC), 827–848 (NLKKLWLVSCCLTSACCQDLAS), and 855–875 (SLTRLYVGENALGDAGVAILC). Residues 797–801 (QKLVE) carry the KFERQ-like motif 3 motif. A Phosphoserine modification is found at Ser-805. Residues Cys-836, Cys-837, and Cys-843 are each lipidated (S-palmitoyl cysteine). Tyr-860 carries the post-translational modification Phosphotyrosine. Residue Lys-877 forms a Glycyl lysine isopeptide (Lys-Gly) (interchain with G-Cter in ubiquitin) linkage. LRR repeat units lie at residues 884-905 (NLQKLGLVNSGLTSACCSALSS), 912-932 (NLTHLYLRGNTLGDKGIKLLC), 941-962 (KLQVLELDNCNLTSHCCWDLST), and 969-990 (SLRKLSLGNNDLGDLGVMMFCE). A Glycyl lysine isopeptide (Lys-Gly) (interchain with G-Cter in ubiquitin) cross-link involves residue Lys-926. Cys-957 is lipidated: S-palmitoyl cysteine. Lys-972 is covalently cross-linked (Glycyl lysine isopeptide (Lys-Gly) (interchain with G-Cter in ubiquitin)). Ser-974 bears the Phosphoserine mark. A KFERQ-like motif 4 motif is present at residues 990 to 994 (EVLKQ). Residue Ser-1034 is modified to Phosphoserine.

The protein belongs to the NLRP family. In terms of assembly, sensor component of NLRP3 inflammasomes; inflammasomes are supramolecular complexes that assemble in the cytosol in response to pathogens and other damage-associated signals and play critical roles in innate immunity and inflammation. The core of NLRP3 inflammasomes consists of a signal sensor component (NLRP3), an adapter (PYCARD/ASC), which recruits an effector pro-inflammatory caspase (CASP1 and, possibly, CASP4 and CASP5). Homodecamer; inactive NLRP3 forms homodecameric double-ring cages that hide pyrin domains within NACHT-LRR rings to avoid premature activation. Interacts (via pyrin domain) with PYCARD/ASC (via pyrin domain); interaction is direct. Interacts (via LRR repeat domain) with NEK7 (via N-terminus); the interaction is required for the formation of the complex NLRP3:PYCARD, oligomerization of PYCARD/ASC and activation of CASP1. Interacts (via LRR repeat domain) with NR4A1/Nur77 (via N-terminus); the interaction is direct, requires activation of NR4A1 by its ligands NBRE-containing dsDNA and lipopolysaccharide, and stimulates the association of NLRP3 with NEK7 for non-canonical NLRP3 inflammasome activation. Interacts with CARD8; leading to inhibit formation of the NLRP3 inflammasome. Interacts with MEFV; this interaction targets NLRP3 to degradation by autophagy, hence preventing excessive IL1B- and IL18-mediated inflammation. Interacts with EIF2AK2/PKR; this interaction requires EIF2AK2 activity, is accompanied by EIF2AK2 autophosphorylation and promotes inflammasome assembly in response to specific stimuli. Interacts with GBP5 (via DAPIN domain); this interaction promotes inflammasome assembly in response to microbial and soluble, but not crystalline, agents. Interacts with PML (isoform PML-1) (via the leucine-rich repeat (LRR) domain); PML-mediated increase in NLRP3 inflammasome activation does not depend upon this interaction. Interacts (via NACHT domain) with DHX33 (via DEAH box); NLRP3 activation in presence of cytosolic dsRNA is mediated by DHX33. Interacts (via NACHT and LRR domains) with ARRB2; this interaction is direct and inducible by polyunsaturated fatty acids (PUFAs). Interacts (via NACHT domain) with DDX3X under both LPS-primed and inflammasome-activating conditions. Interacts with IRF4 (via the LRR domain); this interaction is direct and is required for optimal IRF4 binding to IL4 promoter and efficient IL4 transactivation during differentiation of Th2 helper T-cells. Interacts with MAVS; promoting localization to mitochondria and activation of the NLRP3 inflammasome. Interacts with MARK4; promoting localization of NLRP3 to the microtubule organizing center (MTOC). Interacts with TRIM50; this interaction also promotes NLRP3 oligomerization and subsequent inflammasome activation. Interacts with IRGM; preventing NLRP3 inflammasome assembly and promoting NLRP3 degradation. Interacts (via KFERQ-like motifs) with HSPA8/HSC70; promoting NLRP3 degradation by the chaperone-mediated autophagy pathway. Interacts (via NACHT and LLR domains) with ABHD8; this interaction is enhanced in the presence of NLRP3 inflammasome inducers, such as ATP, nigericin, silica, or alum. Interaction with ABHD8 leads the recruitment of ZDHHC12, hence facilitating NLRP3 palmitoylation and degradation by the chaperone-mediated autophagy pathway (CMA), therefore attenuating NLRP3 inflammasome activation. In terms of processing, the disulfide bond in the pyrin domain might play a role in reactive oxygen species-mediated activation. Post-translationally, phosphorylation at Ser-198 by MAPK8/JNK1 increases inflammasome activation by promoting deubiquitination by BRCC3 and NLRP3 homooligomerization. Phosphorylation at Ser-805 by CSNK1A1 prevents inflammasome activation by preventing NEK7 recruitment. Phosphorylation at Ser-5 in the pyrin domain inhibits homomultimerization of NLRP3 and activation of the NLRP3 inflammasome: dephosphorylation by protein phosphatase 2A (PP2A) promotes assembly of the NLRP3 inflammasome. Phosphorylation at Ser-295 by PKD/PRKD1 promotes NLRP3 inflammasome assembly. Phosphorylation by ERK1/MAPK3 promotes NLRP3 inflammasome assembly. Phosphorylation by BTK (at Tyr-136, Tyr-140, Tyr-143 and Tyr-168) in the region that mediates binding to phosphatidylinositol phosphate, promotes relocalization of NLRP3 and assembly of the NLRP3 inflammasome. Phosphorylation at Tyr-860 inhibits NLRP3 inflammasome assembly: dephosphorylation by PTPN22 promotes inflammasome activation. Phosphorylated by LATS1 and LATS2 at Ser-265 following palmitoylation by ZDHHC1, promoting its relocalization to the microtubule organizing center (MTOC), where NLRP3 is activated by NEK7, leading to inflammasome assembly and activation. Ubiquitinated; undergoes both 'Lys-48'- and 'Lys-63'-linked polyubiquitination. Ubiquitination does not lead to degradation, but inhibits inflammasome activation. Deubiquitination is catalyzed by BRCC3 and associated with NLRP3 activation and inflammasome assembly. This process can be induced by the activation of Toll-like receptors (by LPS), through a non-transcriptional pathway dependent on the mitochondrial production of reactive oxygen species, and by ATP. Ubiquitinated by TRIM31 via 'Lys-48'-linked ubiquitination, leading to its degradation by the proteasome. Ubiquitinated at Lys-689 by the SCF(FBXL2) complex, leading to its degradation by the proteasome. Ubiquitinated by TRIM35 via 'lys-48' and 'Lys-63'-linked ubiquitination leading to inhibition of NLRP3 inflammasome activation. Undergoes 'Lys-27'-linked polyubiquitination by MARCHF5, leading to NLRP3-NEK7 complex formation and NLRP3 oligomerization. In terms of processing, palmitoylation by ZDHHC12 promotes NLRP3 degradation by the chaperone-mediated autophagy pathway (CMA) and therefore limits NLRP3 inflammasome activation. Interaction with ZDHHC12, and hence NLRP3 palmitoylation, is greatly enhanced by ABHD8. Following palmitoylation, HSPA8/HSC70 recognizes and binds the KFERQ-like motifs on NLRP3 and promotes NLRP3 recruitment to lysosomes, where it is degraded via the chaperone-mediated autophagy pathway in a LAMP2-dependent process. Palmitoylation at Cys-836 and Cys-837 by ZDHHC5 enhances its binding to NEK7 leading to inflammasome assembly and activation. Palmitoylation at Cys-130 and Cys-957 by ZDHHC1 facilitates phosphorylation at Ser-265 by LATS1 and LATS2, promoting its relocalization to the microtubule organizing center (MTOC), where NLRP3 is activated by NEK7, leading to inflammasome assembly and activation. Depalmitoylated by ABHD17A. Post-translationally, degraded via selective autophagy following interaction with IRGM. IRGM promotes NLRP3 recruitment to autophagosome membranes, promoting its SQSTM1/p62-dependent autophagy-dependent degradation. As to expression, highly expressed in oocyte, testis, spleen, thymus and kidney.

The protein localises to the cytoplasm. The protein resides in the cytosol. Its subcellular location is the inflammasome. It localises to the cytoskeleton. It is found in the microtubule organizing center. The protein localises to the golgi apparatus membrane. The protein resides in the endoplasmic reticulum. Its subcellular location is the mitochondrion. It localises to the secreted. It is found in the nucleus. The enzyme catalyses ATP + H2O = ADP + phosphate + H(+). Its activity is regulated as follows. Under resting conditions, NLRP3 binds ADP and is autoinhibited. Inactive NLRP3 forms homodecameric double-ring cages that hide pyrin domains within NACHT-LRR rings to avoid premature activation. NLRP3 activation stimuli include extracellular ATP, nigericin, reactive oxygen species, crystals of monosodium urate or cholesterol, amyloid-beta fibers, environmental or industrial particles and nanoparticles, such as asbestos, silica, aluminum salts, cytosolic dsRNA, etc. Almost all stimuli trigger intracellular K(+) efflux. These stimuli lead to membrane perturbations that induce activation of NLRP3. Upon activation, NLRP3 is transported to microtubule organizing center (MTOC), where it is unlocked by NEK7, leading to its relocalization to dispersed trans-Golgi network (dTGN) vesicle membranes and recruitment of PYCARD/ASC for the formation of an active inflammasome complex. NEK7-activated NLRP3 forms a disk-shaped inflammasome. NLRP3 and PYCARD/ASC interact via their respective pyrin domains; interaction initiates speck formation (nucleation) which greatly enhances further addition of soluble PYCARD/ASC molecules to the speck in a prion-like polymerization process. Clustered PYCARD/ASC nucleates the formation of CASP1 filaments through the interaction of their respective CARD domains, acting as a platform for CASP1 polymerization and activation. Active CASP1 then processes IL1B and IL18 precursors, leading to the release of mature cytokines in the extracellular milieu and inflammatory response. NLRP3 inflammasome assembly is inhibited by IRGM, which impedes NLRP3 oligomerization. NLRP3 inflammasome is inhibited by cyclic AMP (cAMP), which directly binds NLRP3; inhibition is relieved by calcium-sensing receptor CASR, which inhibits production of cAMP. Specifically inhibited by sulfonylurea MCC950 (also named CP-456,773, CRID3), a potent and specific small-molecule inhibitor of the NLRP3 inflammasome that acts by preventing ATP hydrolysis. In terms of biological role, sensor component of the NLRP3 inflammasome, which mediates inflammasome activation in response to defects in membrane integrity, leading to secretion of inflammatory cytokines IL1B and IL18 and pyroptosis. In response to pathogens and other damage-associated signals that affect the integrity of membranes, initiates the formation of the inflammasome polymeric complex composed of NLRP3, CASP1 and PYCARD/ASC. Recruitment of pro-caspase-1 (proCASP1) to the NLRP3 inflammasome promotes caspase-1 (CASP1) activation, which subsequently cleaves and activates inflammatory cytokines IL1B and IL18 and gasdermin-D (GSDMD), promoting cytokine secretion and pyroptosis. Activation of NLRP3 inflammasome is also required for HMGB1 secretion; stimulating inflammatory responses. Under resting conditions, ADP-bound NLRP3 is autoinhibited. NLRP3 activation stimuli include extracellular ATP, nigericin, reactive oxygen species, crystals of monosodium urate or cholesterol, amyloid-beta fibers, environmental or industrial particles and nanoparticles, such as asbestos, silica, aluminum salts, cytosolic dsRNA, etc. Almost all stimuli trigger intracellular K(+) efflux. These stimuli lead to membrane perturbation and activation of NLRP3. Upon activation, NLRP3 is transported to microtubule organizing center (MTOC), where it is unlocked by NEK7, leading to its relocalization to dispersed trans-Golgi network (dTGN) vesicle membranes and formation of an active inflammasome complex. Associates with dTGN vesicle membranes by binding to phosphatidylinositol 4-phosphate (PtdIns4P). Shows ATPase activity. Independently of inflammasome activation, regulates the differentiation of T helper 2 (Th2) cells and has a role in Th2 cell-dependent asthma and tumor growth. During Th2 differentiation, required for optimal IRF4 binding to IL4 promoter and for IRF4-dependent IL4 transcription. Binds to the consensus DNA sequence 5'-GRRGGNRGAG-3'. May also participate in the transcription of IL5, IL13, GATA3, CCR3, CCR4 and MAF. This Macaca mulatta (Rhesus macaque) protein is NACHT, LRR and PYD domains-containing protein 3 (NLRP3).